The following is a 177-amino-acid chain: Large ribosomal subunit protein uL6 (177 aa).

Belongs to the universal ribosomal protein uL6 family. In terms of assembly, part of the 50S ribosomal subunit.

This protein binds to the 23S rRNA, and is important in its secondary structure. It is located near the subunit interface in the base of the L7/L12 stalk, and near the tRNA binding site of the peptidyltransferase center. This Rhodopseudomonas palustris (strain HaA2) protein is Large ribosomal subunit protein uL6.